A 136-amino-acid polypeptide reads, in one-letter code: Large ribosomal subunit protein bL17 (136 aa).

It belongs to the bacterial ribosomal protein bL17 family. As to quaternary structure, part of the 50S ribosomal subunit. Contacts protein L32.

The sequence is that of Large ribosomal subunit protein bL17 from Akkermansia muciniphila (strain ATCC BAA-835 / DSM 22959 / JCM 33894 / BCRC 81048 / CCUG 64013 / CIP 107961 / Muc).